Consider the following 107-residue polypeptide: Nucleoid-associated protein MCA1327 (107 aa).

Belongs to the YbaB/EbfC family. In terms of assembly, homodimer.

The protein resides in the cytoplasm. The protein localises to the nucleoid. Binds to DNA and alters its conformation. May be involved in regulation of gene expression, nucleoid organization and DNA protection. In Methylococcus capsulatus (strain ATCC 33009 / NCIMB 11132 / Bath), this protein is Nucleoid-associated protein MCA1327.